The following is a 393-amino-acid chain: Putative acid--amine ligase HI_0929 (393 aa).

An ATP-binding site is contributed by 103 to 105; it reads RFD. Mg(2+) contacts are provided by Asp-105, Glu-117, and Asn-119. ATP is bound by residues Lys-267, Lys-303, Gly-310, Gln-343, and 378 to 380; that span reads AVT.

The protein belongs to the glutathionylspermidine synthase preATP-grasp family.

Its function is as follows. May be a ligase forming an amide bond. Shows ATPase activity. In Haemophilus influenzae (strain ATCC 51907 / DSM 11121 / KW20 / Rd), this protein is Putative acid--amine ligase HI_0929.